Here is a 465-residue protein sequence, read N- to C-terminus: Probable tRNA modification GTPase MnmE (465 aa).

Positions 23, 85, and 124 each coordinate (6S)-5-formyl-5,6,7,8-tetrahydrofolate. Residues 221–384 (GTKVCIIGKP…LNNCILDLSS (164 aa)) form the TrmE-type G domain. GTP contacts are provided by residues 231-236 (NVGKSS), 250-256 (TNFPGTT), and 275-278 (DTAG). 2 residues coordinate Mg(2+): Ser-235 and Thr-256. Lys-465 contacts (6S)-5-formyl-5,6,7,8-tetrahydrofolate.

Belongs to the TRAFAC class TrmE-Era-EngA-EngB-Septin-like GTPase superfamily. TrmE GTPase family. Requires K(+) as cofactor.

Its subcellular location is the plastid. It is found in the chloroplast. Exhibits a very high intrinsic GTPase hydrolysis rate. Involved in the addition of a carboxymethylaminomethyl (cmnm) group at the wobble position (U34) of certain tRNAs, forming tRNA-cmnm(5)s(2)U34. This chain is Probable tRNA modification GTPase MnmE, found in Cyanidium caldarium (Red alga).